We begin with the raw amino-acid sequence, 510 residues long: Maturase K (510 aa).

It belongs to the intron maturase 2 family. MatK subfamily.

The protein localises to the plastid. It localises to the chloroplast. In terms of biological role, usually encoded in the trnK tRNA gene intron. Probably assists in splicing its own and other chloroplast group II introns. The protein is Maturase K of Mammillaria haageana (Cactus).